A 426-amino-acid polypeptide reads, in one-letter code: MVQIEKVFGREIIDSRGNPAVEVDITLVGGYFGRAACPSGASTGTHEAIEKRDGDFRFFGKGVKKAVEAINTDIRKSLLGMDSTDQPAVDNQLISLDGTDNKGHLGANAILPVSMAVARAASQALQVPLYEHLADRTYLLPVPYMNILNGGAHANWQGADFQEYMIAPVGAPDFPEAVRWGCEVYHTLKAILKKRGLSTGVGDEGGFAPKVSSNRAPLDFITEAIEMAGYKPGKDISLALDPASSEFYSDGVYELKSEGKKLSSEEMTGYYEDMVAVYPIISIEDGLSEDDWNGWIAMTKAIGKKVQLVGDDIFVTNTKRISRGISEKAANAVLIKLNQIGTVTETISAVTMARNAGWSSMISHRSGETVDSFIADLTVSLGTGQIKTGAPCRGERVEKYNQLMRIHEELGSRATYAGKKREIRHL.

Gln162 provides a ligand contact to (2R)-2-phosphoglycerate. The active-site Proton donor is Glu204. Mg(2+)-binding residues include Asp241, Glu284, and Asp311. (2R)-2-phosphoglycerate is bound by residues Lys336, Arg365, Ser366, and Lys387. The active-site Proton acceptor is the Lys336.

This sequence belongs to the enolase family. It depends on Mg(2+) as a cofactor.

It localises to the cytoplasm. The protein resides in the secreted. The protein localises to the cell surface. The enzyme catalyses (2R)-2-phosphoglycerate = phosphoenolpyruvate + H2O. Its pathway is carbohydrate degradation; glycolysis; pyruvate from D-glyceraldehyde 3-phosphate: step 4/5. Its function is as follows. Catalyzes the reversible conversion of 2-phosphoglycerate (2-PG) into phosphoenolpyruvate (PEP). It is essential for the degradation of carbohydrates via glycolysis. The protein is Enolase 1 of Methanospirillum hungatei JF-1 (strain ATCC 27890 / DSM 864 / NBRC 100397 / JF-1).